The primary structure comprises 296 residues: Ribosomal RNA small subunit methyltransferase J (296 aa).

An S-adenosyl-L-methionine-binding site is contributed by D205.

It belongs to the methyltransferase superfamily. RsmJ family.

The protein resides in the cytoplasm. The catalysed reaction is guanosine(1516) in 16S rRNA + S-adenosyl-L-methionine = N(2)-methylguanosine(1516) in 16S rRNA + S-adenosyl-L-homocysteine + H(+). In terms of biological role, specifically methylates the guanosine in position 1516 of 16S rRNA. The sequence is that of Ribosomal RNA small subunit methyltransferase J from Psychrobacter arcticus (strain DSM 17307 / VKM B-2377 / 273-4).